The sequence spans 130 residues: Modulator protein MzrA (130 aa).

Residues 1–15 (MIAAFIKRHAPQRRL) are Cytoplasmic-facing. The chain crosses the membrane as a helical span at residues 16 to 36 (SLWLALPVVALLALVMMPALF). Residues 37-130 (RHDSALQIRA…RISFKPQSIG (94 aa)) lie on the Periplasmic side of the membrane.

It belongs to the MzrA family. In terms of assembly, interacts with EnvZ.

It localises to the cell inner membrane. Functionally, modulates the activity of the EnvZ/OmpR two-component regulatory system, probably by directly modulating EnvZ enzymatic activity and increasing stability of phosphorylated OmpR. The polypeptide is Modulator protein MzrA (Erwinia tasmaniensis (strain DSM 17950 / CFBP 7177 / CIP 109463 / NCPPB 4357 / Et1/99)).